The following is a 4249-amino-acid chain: Fibrocystin-L (4249 aa).

Residues 1 to 20 form the signal peptide; that stretch reads MGHLWLSGTWFLFGLLWCAA. The Extracellular segment spans residues 21–4222; it reads DSHKGSSETI…TPVQTLAVIT (4202 aa). 14 IPT/TIG domains span residues 31–132, 146–255, 270–361, 1067–1153, 1155–1234, 1240–1323, 1329–1468, 1565–1648, 1658–1742, 1748–1827, 1830–1909, 1915–1996, 1998–2084, and 2090–2175; these read PKVT…GVAS, PTIR…KMTY, PEVV…ILEY, PLIL…HFIY, SQIS…SFSY, PVVT…KLNA, LEVI…SFSY, PSII…TLTK, PNID…SFSY, PYVT…NLTI, PAVA…SFTY, PFLK…AFEY, LSIQ…LFTY, and PLIT…DFLY. A PA14 domain is found at 337-492; sequence PGGRGLKVEV…NVFTEQQTGD (156 aa). O-linked (GalNAc...) threonine glycans are attached at residues Thr1297 and Thr1359. An O-linked (GalNAc...) threonine glycan is attached at Thr1838. Residues 2183-2303 form the G8 1 domain; it reads SSWGGSPPPE…IPVVWTRLTH (121 aa). PbH1 repeat units lie at residues 2484–2506, 2507–2529, 2565–2587, 2664–2686, and 2732–2755; these read QFKSYVKGCAIHQSYNRAITIHN, THHLLVERNIIYDIKGGAFFIED, NPNNTIRHNAAAGGTHFGFWYRM, GGALQFHNFVMVNNNEAGIETKR, and SQGLTVSSVHFMNFDRHACVALGV. A G8 2 domain is found at 3035 to 3173; the sequence is SFWQSSPENN…HSVYKTKLLE (139 aa). PbH1 repeat units lie at residues 3292–3314, 3354–3376, 3415–3437, 3470–3492, and 3493–3514; these read KGNARISNVEFHHSGQEGYRDST, TDGVDIDDNIIYFTVGEGIRIWG, GTNTVLQNNVVAGFGRVGYRIDG, PGCSLIQGFTIWTCWDYGIYFQT, and TESVHIYNVTLVNNGMSIFSMV. Thr3735 carries O-linked (GalNAc...) threonine glycosylation. Positions 4183-4208 are disordered; the sequence is LSAQSVPGGSGSSPGSGSSSSGHSKA. Residues 4197–4208 show a composition bias toward low complexity; the sequence is GSGSSSSGHSKA. A helical transmembrane segment spans residues 4223 to 4243; that stretch reads ACLVGRLLLLEVFMAAVFILN. Topologically, residues 4244–4249 are cytoplasmic; it reads TTVGIN.

Expressed in neurons in the hippocampus and the cerebral cortex (at protein level). Transiently expressed at high levels in inner ear hair cells, predominantly in outer hair cells, during early postnatal development (at protein level).

It localises to the membrane. The protein localises to the cell projection. It is found in the stereocilium membrane. Its function is as follows. Component of hair-cell stereocilia coat. Required for normal hearing. The chain is Fibrocystin-L (Pkhd1l1) from Mus musculus (Mouse).